The primary structure comprises 393 residues: Phospho-N-acetylmuramoyl-pentapeptide-transferase (393 aa).

The next 10 helical transmembrane spans lie at 29-49, 75-95, 101-121, 138-158, 193-213, 226-246, 263-283, 290-310, 315-335, and 370-390; these read RAVMAAMTALLIGLALGPIVI, TPTMGGALILLAIAISTLLWF, FVWIVMIVTFGFGAIGWVDDW, YFWQSLIGLVAALYLAFSVSE, SISYPLGVFGFIFLTYVVIVG, GLAIMPVVMVGSALGIFAYAT, AGELMIFCAAMAGAGLAFLWF, VFMGDVGALALGGALGTIAVI, VVLAIMGGIFVLEALSVMAQV, and QVVVRFWIITMLLCLVGLSSL.

The protein belongs to the glycosyltransferase 4 family. MraY subfamily. Requires Mg(2+) as cofactor.

It localises to the cell inner membrane. The catalysed reaction is UDP-N-acetyl-alpha-D-muramoyl-L-alanyl-gamma-D-glutamyl-meso-2,6-diaminopimeloyl-D-alanyl-D-alanine + di-trans,octa-cis-undecaprenyl phosphate = di-trans,octa-cis-undecaprenyl diphospho-N-acetyl-alpha-D-muramoyl-L-alanyl-D-glutamyl-meso-2,6-diaminopimeloyl-D-alanyl-D-alanine + UMP. It participates in cell wall biogenesis; peptidoglycan biosynthesis. Its function is as follows. Catalyzes the initial step of the lipid cycle reactions in the biosynthesis of the cell wall peptidoglycan: transfers peptidoglycan precursor phospho-MurNAc-pentapeptide from UDP-MurNAc-pentapeptide onto the lipid carrier undecaprenyl phosphate, yielding undecaprenyl-pyrophosphoryl-MurNAc-pentapeptide, known as lipid I. This Methylibium petroleiphilum (strain ATCC BAA-1232 / LMG 22953 / PM1) protein is Phospho-N-acetylmuramoyl-pentapeptide-transferase.